Reading from the N-terminus, the 145-residue chain is D-aminoacyl-tRNA deacylase (145 aa).

The Gly-cisPro motif, important for rejection of L-amino acids motif lies at 137–138 (GP).

This sequence belongs to the DTD family. Homodimer.

The protein localises to the cytoplasm. The catalysed reaction is glycyl-tRNA(Ala) + H2O = tRNA(Ala) + glycine + H(+). It carries out the reaction a D-aminoacyl-tRNA + H2O = a tRNA + a D-alpha-amino acid + H(+). In terms of biological role, an aminoacyl-tRNA editing enzyme that deacylates mischarged D-aminoacyl-tRNAs. Also deacylates mischarged glycyl-tRNA(Ala), protecting cells against glycine mischarging by AlaRS. Acts via tRNA-based rather than protein-based catalysis; rejects L-amino acids rather than detecting D-amino acids in the active site. By recycling D-aminoacyl-tRNA to D-amino acids and free tRNA molecules, this enzyme counteracts the toxicity associated with the formation of D-aminoacyl-tRNA entities in vivo and helps enforce protein L-homochirality. This is D-aminoacyl-tRNA deacylase from Sodalis glossinidius (strain morsitans).